Reading from the N-terminus, the 96-residue chain is Putative pterin-4-alpha-carbinolamine dehydratase (96 aa).

The protein belongs to the pterin-4-alpha-carbinolamine dehydratase family.

It catalyses the reaction (4aS,6R)-4a-hydroxy-L-erythro-5,6,7,8-tetrahydrobiopterin = (6R)-L-erythro-6,7-dihydrobiopterin + H2O. In Metallosphaera sedula (strain ATCC 51363 / DSM 5348 / JCM 9185 / NBRC 15509 / TH2), this protein is Putative pterin-4-alpha-carbinolamine dehydratase.